The chain runs to 584 residues: Adenine deaminase (584 aa).

Belongs to the metallo-dependent hydrolases superfamily. Adenine deaminase family. It depends on Mn(2+) as a cofactor.

The enzyme catalyses adenine + H2O + H(+) = hypoxanthine + NH4(+). The chain is Adenine deaminase from Methanococcoides burtonii (strain DSM 6242 / NBRC 107633 / OCM 468 / ACE-M).